A 302-amino-acid polypeptide reads, in one-letter code: MAQKRLTHLRQLEAESIHIIREVAAEFSNPVMLYSIGKDSSVMLHLARKAFYPGTLPFPLLHVDTGWKFREMYEFRDRTAKAYGCELLVHKNPEGVAMGINPFVHGSAKHTDIMKTEGLKQALNKYGFDAAFGGARRDEEKSRAKERIYSFRDRFHRWDPKNQRPELWHNYNGQINKGESIRVFPLSNWTEQDIWQYIWLENIDIVPLYLAAERPVLERDGMLMMIDDNRIDLQPGEVIKKRMVRFRTLGCWPLTGAVESNAQTLPEIIEEMLVSTTSERQGRVIDRDQAGSMELKKRQGYF.

The protein belongs to the PAPS reductase family. CysD subfamily. In terms of assembly, heterodimer composed of CysD, the smaller subunit, and CysN.

It catalyses the reaction sulfate + ATP + H(+) = adenosine 5'-phosphosulfate + diphosphate. It functions in the pathway sulfur metabolism; hydrogen sulfide biosynthesis; sulfite from sulfate: step 1/3. With CysN forms the ATP sulfurylase (ATPS) that catalyzes the adenylation of sulfate producing adenosine 5'-phosphosulfate (APS) and diphosphate, the first enzymatic step in sulfur assimilation pathway. APS synthesis involves the formation of a high-energy phosphoric-sulfuric acid anhydride bond driven by GTP hydrolysis by CysN coupled to ATP hydrolysis by CysD. This chain is Sulfate adenylyltransferase subunit 2, found in Shigella boydii serotype 4 (strain Sb227).